A 190-amino-acid chain; its full sequence is Putative manganese efflux pump MntP (190 aa).

6 consecutive transmembrane segments (helical) span residues 3–23, 37–57, 72–88, 111–131, 138–158, and 164–184; these read FLQIFLLSIGVAADAFACSVV, LVLAGIFGVFQAAMPLIGWVI, HWIAFALLGVVGAKMIW, IILGLATSIDALAVGMGLAFV, VALSMGLITFALSLVGAWIGH, and FGKWATILGGIILIGIGANIV.

The protein belongs to the MntP (TC 9.B.29) family.

The protein localises to the cell membrane. Its function is as follows. Probably functions as a manganese efflux pump. The sequence is that of Putative manganese efflux pump MntP from Corynebacterium glutamicum (strain R).